A 153-amino-acid chain; its full sequence is Ribosome maturation factor RimP (153 aa).

This sequence belongs to the RimP family.

It is found in the cytoplasm. In terms of biological role, required for maturation of 30S ribosomal subunits. The polypeptide is Ribosome maturation factor RimP (Clostridium botulinum (strain Okra / Type B1)).